The primary structure comprises 395 residues: MEKALLLYSGGLDTSVMVRWIKEKMNMDVVTLTLDIGNSDLEEIKEKALKLGAIDAITLDVKKEFADNYISREIHANGLYGEYPLSTALARPLMAEKAVSVANENDIKFIAHGSTGKGNDQVRFEVSINALDNNIKVIAPVREWNMTRADELEYAKMNNIYVKSDGKYSVDENIWGRSIEGSSIENINEPVNDDAFEWVTPPQYCGSGEPVSIEFYKGLPSSLNGKSMDLLSIIKNLNIIAGRNGIGIINMIESRLIGLKSHEVYECPAASVILKAHKYLENLILNKNELSVKNYIDNFWSNMVYNGLWFDPSMEHMNQFEKSSNQYITGSVNLRLYRGNMILEGIESPYSLYDYNTINYETGVFDQGSSKGFIDIYKNETVRSNRVKKALTVIH.

ATP is bound at residue 7 to 15 (LYSGGLDTS). Tyrosine 83 is an L-citrulline binding site. Glycine 113 contributes to the ATP binding site. L-aspartate-binding residues include threonine 115, asparagine 119, and aspartate 120. Residue asparagine 119 participates in L-citrulline binding. Positions 123, 169, 178, 253, and 265 each coordinate L-citrulline.

It belongs to the argininosuccinate synthase family. Type 1 subfamily. As to quaternary structure, homotetramer.

The protein resides in the cytoplasm. The catalysed reaction is L-citrulline + L-aspartate + ATP = 2-(N(omega)-L-arginino)succinate + AMP + diphosphate + H(+). Its pathway is amino-acid biosynthesis; L-arginine biosynthesis; L-arginine from L-ornithine and carbamoyl phosphate: step 2/3. This Picrophilus torridus (strain ATCC 700027 / DSM 9790 / JCM 10055 / NBRC 100828 / KAW 2/3) protein is Argininosuccinate synthase.